Here is a 423-residue protein sequence, read N- to C-terminus: Lipoamide acyltransferase component of branched-chain alpha-keto acid dehydrogenase complex (423 aa).

Positions 3–78 (THVIKMPDIG…AVGSELIRIE (76 aa)) constitute a Lipoyl-binding domain. Lys-44 is subject to N6-lipoyllysine. The region spanning 137–174 (LASPAVRKRALDAGIELRYVHGSGPAGRILHEDLDAFM) is the Peripheral subunit-binding (PSBD) domain. Active-site residues include His-395 and Asp-399.

This sequence belongs to the 2-oxoacid dehydrogenase family. As to quaternary structure, forms a 24-polypeptide structural core with octahedral symmetry. The cofactor is (R)-lipoate.

The enzyme catalyses N(6)-[(R)-dihydrolipoyl]-L-lysyl-[protein] + 2-methylpropanoyl-CoA = N(6)-[(R)-S(8)-2-methylpropanoyldihydrolipoyl]-L-lysyl-[protein] + CoA. In terms of biological role, the branched-chain alpha-keto dehydrogenase complex catalyzes the overall conversion of alpha-keto acids to acyl-CoA and CO(2). It contains multiple copies of three enzymatic components: branched-chain alpha-keto acid decarboxylase (E1), lipoamide acyltransferase (E2) and lipoamide dehydrogenase (E3). In Pseudomonas putida (Arthrobacter siderocapsulatus), this protein is Lipoamide acyltransferase component of branched-chain alpha-keto acid dehydrogenase complex (bkdB).